The following is a 206-amino-acid chain: Translation initiation factor IF-3 (206 aa).

The protein belongs to the IF-3 family. As to quaternary structure, monomer.

It is found in the cytoplasm. IF-3 binds to the 30S ribosomal subunit and shifts the equilibrium between 70S ribosomes and their 50S and 30S subunits in favor of the free subunits, thus enhancing the availability of 30S subunits on which protein synthesis initiation begins. The protein is Translation initiation factor IF-3 of Shigella flexneri.